Here is a 363-residue protein sequence, read N- to C-terminus: tRNA(Met) cytidine acetate ligase (363 aa).

ATP-binding positions include 7 to 20 (IAEF…HKYL), Gly96, Asn152, and Arg175.

It belongs to the TmcAL family.

The protein resides in the cytoplasm. It catalyses the reaction cytidine(34) in elongator tRNA(Met) + acetate + ATP = N(4)-acetylcytidine(34) in elongator tRNA(Met) + AMP + diphosphate. Functionally, catalyzes the formation of N(4)-acetylcytidine (ac(4)C) at the wobble position of elongator tRNA(Met), using acetate and ATP as substrates. First activates an acetate ion to form acetyladenylate (Ac-AMP) and then transfers the acetyl group to tRNA to form ac(4)C34. The polypeptide is tRNA(Met) cytidine acetate ligase (Streptococcus thermophilus (strain ATCC BAA-250 / LMG 18311)).